We begin with the raw amino-acid sequence, 591 residues long: Protein NRT1/ PTR FAMILY 4.3 (591 aa).

Residues 1 to 10 (MAEINKQSNK) show a composition bias toward polar residues. Residues 1 to 38 (MAEINKQSNKWEQEEVSNENNWELAEEESVDWRGRPSN) are disordered. The next 12 membrane-spanning stretches (helical) occupy residues 47-67 (AALF…AVGN), 85-105 (ANIV…GGYL), 109-129 (FLGS…GFIL), 157-177 (GFKA…SGCV), 204-224 (FNAA…LLVW), 233-253 (IGFG…VSGT), 347-367 (LISL…LAQL), 395-415 (AIPY…LVPF), 429-449 (LTRI…AAML), 463-483 (ILSI…EMFT), 502-522 (FLMA…SVLV), and 551-571 (LFYW…LFWS).

Belongs to the major facilitator superfamily. Proton-dependent oligopeptide transporter (POT/PTR) (TC 2.A.17) family. Expressed in flowers. Detected in roots and siliques.

The protein localises to the membrane. In Arabidopsis thaliana (Mouse-ear cress), this protein is Protein NRT1/ PTR FAMILY 4.3 (NPF4.3).